Here is a 305-residue protein sequence, read N- to C-terminus: MELIFLGTSAGVPTRSRNVTAILLHLQHPTQPGVWLFDCGEGTQHQMLNTAFHPGKLERIFISHLHGDHLFGLPGLLCSRSMAGPPHPLTVYGPQGVREFIATTLRLSGSWTDFPLQIEEISAGDILDDGLRKVTAFRLEHPLECYGYRVVEHDKPGALNARALKAAGVTPGPLFQALKAGKTVTLADGRQINGADYLAPAVAGKSVAIFGDTAPCEAALALAQGVDVMVHETTLDASMEEKANARGHSSTRQTATLAREAAVGRLIMTHISSRYDDKGCQRLLAECRAIFPATELAYDFSVFPV.

Zn(2+)-binding residues include His64, His66, Asp68, His69, His141, Asp212, and His270. The active-site Proton acceptor is Asp68.

Belongs to the RNase Z family. RNase BN subfamily. In terms of assembly, homodimer. Zn(2+) serves as cofactor.

Functionally, zinc phosphodiesterase, which has both exoribonuclease and endoribonuclease activities. The protein is Ribonuclease BN of Salmonella paratyphi C (strain RKS4594).